The following is a 176-amino-acid chain: UBA-like domain-containing protein 1 (176 aa).

Low complexity-rich tracts occupy residues 88–105 (ESFH…TSAT) and 120–137 (TPSW…QHLQ). Positions 88 to 176 (ESFHSGGSSG…RAHPAMEAER (89 aa)) are disordered. Positions 138 to 150 (PQPPLWTPAPPSP) are enriched in pro residues. Over residues 166–176 (PRAHPAMEAER) the composition is skewed to basic and acidic residues.

This sequence belongs to the UBALD family.

The chain is UBA-like domain-containing protein 1 (Ubald1) from Rattus norvegicus (Rat).